We begin with the raw amino-acid sequence, 266 residues long: MFSVLISLYNKEKPENLEQCLESLHQQTLNADEIVLVYDGPVSESLKAVATRWANLLPLVIVPLEKNLGLGKALNAGLERCTHNVVARMDTDDICLPERFEKQISYMESHPEVVLSGAAVIEFDEHGKERLKRLPLSNNDIHQFARMKNPFNHMCVVFRKDKVISAGSYQHHLYMEDYNLWLRIMSLGHPVANLPDVLMKVRAGSDMVNKRRGWNYIKSEVQLYRLKLALKQTGFIRGTLYFLIRTMTRLMPVKVMQFLYEKDRKG.

This sequence belongs to the glycosyltransferase 2 family.

It functions in the pathway glycan metabolism; exopolysaccharide biosynthesis. Its function is as follows. Involved in the biosynthesis of amylovoran which functions as a virulence factor. The protein is Amylovoran biosynthesis glycosyltransferase AmsE (amsE) of Erwinia amylovora (Fire blight bacteria).